A 158-amino-acid chain; its full sequence is Snaclec stejaggregin-A subunit alpha (158 aa).

The first 23 residues, 1–23, serve as a signal peptide directing secretion; the sequence is MGRFISVSFGLLVVFLSLSGTGA. 3 cysteine pairs are disulfide-bonded: cysteine 27-cysteine 38, cysteine 55-cysteine 152, and cysteine 127-cysteine 144. One can recognise a C-type lectin domain in the interval 34–153; that stretch reads YDWYCYKPFN…CQAKNPFVCK (120 aa).

This sequence belongs to the snaclec family. As to quaternary structure, heteromultimer; disulfide-linked. As to expression, expressed by the venom gland.

It is found in the secreted. Functionally, interferes with one step of hemostasis (modulation of platelet aggregation, or coagulation cascade, for example). This is Snaclec stejaggregin-A subunit alpha from Trimeresurus stejnegeri (Chinese green tree viper).